The sequence spans 473 residues: Glycine receptor subunit beta-type 4 (473 aa).

The signal sequence occupies residues 1–19 (MHSLFLKILIYSLMQCVLG). At 20–249 (QAEFWDYDEN…EFHVDREITH (230 aa)) the chain is on the extracellular side. 3 N-linked (GlcNAc...) asparagine glycosylation sites follow: N29, N105, and N151. An intrachain disulfide couples C166 to C180. Residues 250 to 271 (HIIQSYIPTSLIVIISWFSFWL) form a helical membrane-spanning segment. The Cytoplasmic segment spans residues 272-276 (DVEAV). A helical membrane pass occupies residues 277-297 (PGRVSLSITTLLTLATQSSAA). Residues 298–308 (RMALPQASDVK) lie on the Extracellular side of the membrane. The chain crosses the membrane as a helical span at residues 309–329 (AIDVWMGTCMAFVFSAMIEFT). Residues 330–439 (VVNYCVRRKV…NRKNAQKIDR (110 aa)) are Cytoplasmic-facing. The helical transmembrane segment at 440–460 (YSRALFPLAFIIFNIFYWIYY) threads the bilayer. Over 461 to 473 (LKYAGSNSPELLL) the chain is Extracellular.

This sequence belongs to the ligand-gated ion channel (TC 1.A.9) family. Glycine receptor (TC 1.A.9.3) subfamily. As to quaternary structure, pentamer.

It is found in the postsynaptic cell membrane. Its subcellular location is the synapse. The protein localises to the cell membrane. Glycine receptors are ligand-gated chloride channels. Channel opening is triggered by extracellular glycine. Contributes to the generation of inhibitory postsynaptic currents. The protein is Glycine receptor subunit beta-type 4 of Caenorhabditis elegans.